Consider the following 93-residue polypeptide: Phosphoribosyl-ATP pyrophosphatase (93 aa).

The protein belongs to the PRA-PH family.

The protein resides in the cytoplasm. The catalysed reaction is 1-(5-phospho-beta-D-ribosyl)-ATP + H2O = 1-(5-phospho-beta-D-ribosyl)-5'-AMP + diphosphate + H(+). The protein operates within amino-acid biosynthesis; L-histidine biosynthesis; L-histidine from 5-phospho-alpha-D-ribose 1-diphosphate: step 2/9. This chain is Phosphoribosyl-ATP pyrophosphatase, found in Mycolicibacterium gilvum (strain PYR-GCK) (Mycobacterium gilvum (strain PYR-GCK)).